The primary structure comprises 88 residues: Small ribosomal subunit protein bS20 (88 aa).

Belongs to the bacterial ribosomal protein bS20 family.

In terms of biological role, binds directly to 16S ribosomal RNA. The polypeptide is Small ribosomal subunit protein bS20 (Heliobacterium modesticaldum (strain ATCC 51547 / Ice1)).